Here is a 127-residue protein sequence, read N- to C-terminus: Fluoride-specific ion channel FluC (127 aa).

Helical transmembrane passes span 7–27 (LFLI…LTLL), 37–57 (FGTL…LAMF), 70–90 (FFVT…AEVI), and 102–122 (ITIT…GVFI). Na(+) is bound by residues Gly77 and Thr80.

This sequence belongs to the fluoride channel Fluc/FEX (TC 1.A.43) family.

The protein resides in the cell inner membrane. The enzyme catalyses fluoride(in) = fluoride(out). Na(+) is not transported, but it plays an essential structural role and its presence is essential for fluoride channel function. Functionally, fluoride-specific ion channel. Important for reducing fluoride concentration in the cell, thus reducing its toxicity. The chain is Fluoride-specific ion channel FluC from Histophilus somni (strain 129Pt) (Haemophilus somnus).